Here is a 448-residue protein sequence, read N- to C-terminus: METKGRRSAAVLDQQDESEAHPRKRPTRRAPLHRDGNNPDSDAATMEGSDPGSAGRPSSDSLLQEPSQPAKRGGLLDRDAIEHITELWDRLELLQQTLSKMPMADGLKPLKNFSSLQELLSLGGERLLTDLVRENIHVREMMNEVAPLLREDGSCRSLNYHLQPVIGVIYGPTGCGKSQLLRNLLSSQLITPAPETVFFIAPQVDMIPPSELKAWEMQICEGNYAPGPQGTFIPQSGTLRPKFIKMAYDDLTQEHNYDVSDPRNVFARAAAHGPIAIIMDECMENLGGHKGVSKFFHAFPSKLHDKFPKCTGYTVLVVLHNMNPRRDLGGNIANLKIQSKMHIISPRMHPSQLNRFVNTYTKGLPVAISLLLKDIVQHHALRPCYDWVIYNTTPEQEALQWSHLHPRDGLMPMYLNIQSHLYRVLEKIHRVLNDRNRWSRAYRARKIK.

Residues 1–76 (METKGRRSAA…SQPAKRGGLL (76 aa)) are disordered. Positions 22–31 (PRKRPTRRAP) are enriched in basic residues. The segment covering 56 to 67 (RPSSDSLLQEPS) has biased composition (polar residues). Residue 171 to 178 (GPTGCGKS) participates in ATP binding. The interval 440 to 448 (RAYRARKIK) is DNA-binding.

Belongs to the adenoviridae packaging protein 1 family. Homodimer. Part of a genome packaging complex composed of packaging proteins 1, 2 and 3; this complex specifically binds to the packaging sequence on the left end of viral genomic DNA and performs packaging of the viral genome. Interacts with protein 33K.

It localises to the virion. Its subcellular location is the host nucleus. It is found in the host nucleoplasm. The protein resides in the host nucleolus. Functionally, component of the packaging machinery which encapsidates the viral DNA into preformed capsids and transcriptional activator of the viral major late promoter (MLP). Binds, along with packaging proteins 2 and 3, to the specific packaging sequence on the left end of viral genomic DNA and displays ATPase activity thereby providing the power stroke of the packaging machinery. The activity of packaging protein IVa2 is stimulated by protein 33K which acts as a terminase. May be the protein that pumps DNA into the capsid powered by ATP hydrolysis. Specifically binds to the 5'-CG-3' nucleotides of the repeats making up the packaging sequence. Component of the DEF-A and DEF-B transcription factors that bind downstream elements of the major late promoter (MLP), and stimulate transcription from the MLP after initiation of viral DNA replication. DEF-A is a heterodimer packaging proteins 1 and 2 and DEF-B is a homodimer of packaging protein 1. The protein is Packaging protein 1 of Human adenovirus B serotype 7 (HAdV-7).